Here is a 1169-residue protein sequence, read N- to C-terminus: DNA repair protein RAD5 (1169 aa).

An N-acetylserine modification is found at Ser2. A phosphoserine mark is found at Ser20, Ser23, Ser129, and Ser130. Basic and acidic residues predominate over residues 302 to 317; that stretch reads MKRRRTEGGNKREKDN. Positions 302–327 are disordered; the sequence is MKRRRTEGGNKREKDNGNFGRTLTET. The Helicase ATP-binding domain maps to 519-730; the sequence is PILKTMIKGG…YSLVKFLELD (212 aa). 532–539 lines the ATP pocket; the sequence is DEMGLGKT. A DEGH box motif is present at residues 681–684; that stretch reads DEGH. The RING-type zinc-finger motif lies at 914-961; sequence CSICTTEPMDLDKALFTECGHSFCEKCLFEYIEFQNSKNLGLKCPNCR. In terms of domain architecture, Helicase C-terminal spans 995-1165; the sequence is KITALLKELQ…RRKRRIEEIQ (171 aa).

It belongs to the SNF2/RAD54 helicase family. In terms of assembly, homodimer. Interacts with POL30, RAD18, UBC9 and UBC13. Mg(2+) is required as a cofactor. Mn(2+) serves as cofactor. Requires Ca(2+) as cofactor.

The protein localises to the cytoplasm. It localises to the nucleus. Functionally, probable helicase, member of the UBC2/RAD6 epistasis group. Functions with the DNA repair protein RAD18 in error-free postreplication DNA repair. Involved in the maintenance of wild-type rates of instability of simple repetitive sequences such as poly(GT) repeats. Seems to be involved in maintaining a balance which acts in favor of error-prone non-homologous joining during DNA double-strand breaks repairs. Recruits the UBC13-MMS2 dimer to chromatin for DNA repair. In Saccharomyces cerevisiae (strain ATCC 204508 / S288c) (Baker's yeast), this protein is DNA repair protein RAD5 (RAD5).